The following is a 363-amino-acid chain: Ethanol acetyltransferase 1 (363 aa).

The transit peptide at 1-19 (MLLAYTVRPSNWSFTRRAY) directs the protein to the mitochondrion. The AB hydrolase-1 domain maps to 65–164 (PIIFYHGLLG…FSAACIIDNS (100 aa)). Active-site charge relay system residues include Ser138, Asp162, and His313.

It belongs to the AB hydrolase superfamily.

It localises to the mitochondrion. The enzyme catalyses ethanol + acetyl-CoA = ethyl acetate + CoA. It catalyses the reaction acetyl-CoA + H2O = acetate + CoA + H(+). It carries out the reaction ethyl acetate + H2O = ethanol + acetate + H(+). Its function is as follows. Alcohol acetyltransferase that catalyzes the synthesis of ethyl acetate from ethanol and acetyl-CoA. Can also function as a thioesterase by hydrolyzing acetyl-CoA in the absence of ethanol, as well as esterase hydrolyzing ethyl acetate. The protein is Ethanol acetyltransferase 1 (EAT1) of Kluyveromyces marxianus (strain DMKU3-1042 / BCC 29191 / NBRC 104275) (Yeast).